The sequence spans 593 residues: Arginine--tRNA ligase (593 aa).

The 'HIGH' region signature appears at 138–148 (ANPTGPLHVGH).

This sequence belongs to the class-I aminoacyl-tRNA synthetase family. Monomer.

It localises to the cytoplasm. It catalyses the reaction tRNA(Arg) + L-arginine + ATP = L-arginyl-tRNA(Arg) + AMP + diphosphate. In Burkholderia lata (strain ATCC 17760 / DSM 23089 / LMG 22485 / NCIMB 9086 / R18194 / 383), this protein is Arginine--tRNA ligase.